We begin with the raw amino-acid sequence, 341 residues long: Tetraacyldisaccharide 4'-kinase (341 aa).

An ATP-binding site is contributed by Thr54–Thr61.

Belongs to the LpxK family.

It carries out the reaction a lipid A disaccharide + ATP = a lipid IVA + ADP + H(+). It functions in the pathway glycolipid biosynthesis; lipid IV(A) biosynthesis; lipid IV(A) from (3R)-3-hydroxytetradecanoyl-[acyl-carrier-protein] and UDP-N-acetyl-alpha-D-glucosamine: step 6/6. Its function is as follows. Transfers the gamma-phosphate of ATP to the 4'-position of a tetraacyldisaccharide 1-phosphate intermediate (termed DS-1-P) to form tetraacyldisaccharide 1,4'-bis-phosphate (lipid IVA). The protein is Tetraacyldisaccharide 4'-kinase of Brucella melitensis biotype 1 (strain ATCC 23456 / CCUG 17765 / NCTC 10094 / 16M).